The chain runs to 489 residues: N-succinylglutamate 5-semialdehyde dehydrogenase (489 aa).

223–228 is an NAD(+) binding site; sequence GSASTG. Catalysis depends on residues E246 and C280.

It belongs to the aldehyde dehydrogenase family. AstD subfamily.

It carries out the reaction N-succinyl-L-glutamate 5-semialdehyde + NAD(+) + H2O = N-succinyl-L-glutamate + NADH + 2 H(+). It functions in the pathway amino-acid degradation; L-arginine degradation via AST pathway; L-glutamate and succinate from L-arginine: step 4/5. In terms of biological role, catalyzes the NAD-dependent reduction of succinylglutamate semialdehyde into succinylglutamate. This is N-succinylglutamate 5-semialdehyde dehydrogenase from Acinetobacter baylyi (strain ATCC 33305 / BD413 / ADP1).